The chain runs to 417 residues: Probable dihydrofolate synthetase (417 aa).

34–37 (GKGS) contributes to the ATP binding site. 3 residues coordinate Mg(2+): serine 58, glutamate 123, and histidine 151. ATP-binding residues include arginine 274 and aspartate 289.

This sequence belongs to the folylpolyglutamate synthase family.

It catalyses the reaction 7,8-dihydropteroate + L-glutamate + ATP = 7,8-dihydrofolate + ADP + phosphate + H(+). It participates in cofactor biosynthesis; tetrahydrofolylpolyglutamate biosynthesis. In terms of biological role, glutamate-adding enzyme which catalyzes the binding of the first glutamyl side chain to dihydropteroate. Leads to the de nove synthesis of tetrahydrofolate. de novo. The chain is Probable dihydrofolate synthetase (fol3) from Schizosaccharomyces pombe (strain 972 / ATCC 24843) (Fission yeast).